Here is a 527-residue protein sequence, read N- to C-terminus: UDP-glucuronosyltransferase 2A1 (527 aa).

The N-terminal stretch at 1-20 (MLNNLLLFSLQISLIGTTLG) is a signal peptide. At 21–491 (GNVLIWPMEG…TWFQYHSLDV (471 aa)) the chain is on the lumenal side. 3 N-linked (GlcNAc...) asparagine glycosylation sites follow: Asn49, Leu313, and Asn347. The chain crosses the membrane as a helical span at residues 492–512 (IGFLLVCVTTAIFLVIQCCLF). At 513–527 (SCQKFGKIGKKKKRE) the chain is on the cytoplasmic side.

It belongs to the UDP-glycosyltransferase family. As to expression, olfactory epithelium, brain and fetal lung. Not present in liver.

Its subcellular location is the membrane. The protein resides in the endoplasmic reticulum membrane. The enzyme catalyses glucuronate acceptor + UDP-alpha-D-glucuronate = acceptor beta-D-glucuronoside + UDP + H(+). The catalysed reaction is 16beta,17beta-estriol + UDP-alpha-D-glucuronate = 16beta,17beta-estriol 16-O-(beta-D-glucuronate) + UDP + H(+). It catalyses the reaction 16alpha,17alpha-estriol + UDP-alpha-D-glucuronate = 16alpha,17alpha-estriol 16-O-(beta-D-glucuronate) + UDP + H(+). It carries out the reaction 17alpha-estradiol + UDP-alpha-D-glucuronate = 17alpha-estradiol 17-O-(beta-D-glucuronate) + UDP + H(+). The enzyme catalyses 17alpha-estradiol + UDP-alpha-D-glucuronate = 17alpha-estradiol 3-O-(beta-D-glucuronate) + UDP + H(+). The catalysed reaction is 17beta-estradiol + UDP-alpha-D-glucuronate = 17beta-estradiol 3-O-(beta-D-glucuronate) + UDP + H(+). It catalyses the reaction 17beta-estradiol + UDP-alpha-D-glucuronate = 17beta-estradiol 17-O-(beta-D-glucuronate) + UDP + H(+). It carries out the reaction testosterone + UDP-alpha-D-glucuronate = testosterone 17-O-(beta-D-glucuronate) + UDP + H(+). The enzyme catalyses epitestosterone + UDP-alpha-D-glucuronate = epitestosterone 17-O-(beta-D-glucuronate) + UDP + H(+). The catalysed reaction is lithocholate + UDP-alpha-D-glucuronate = lithocholoyl-3-O-(beta-D-glucuronate) + UDP + H(+). It catalyses the reaction lithocholate + UDP-alpha-D-glucuronate = lithocholoyl-24-O-(beta-D-glucuronate) + UDP. It carries out the reaction deoxycholate + UDP-alpha-D-glucuronate = deoxycholoyl-24-O-(beta-D-glucuronate) + UDP. The enzyme catalyses hyodeoxycholate + UDP-alpha-D-glucuronate = hyodeoxycholoyl-24-O-(beta-D-glucuronate) + UDP. The catalysed reaction is hyocholate + UDP-alpha-D-glucuronate = hyocholoyl-24-O-(beta-D-glucuronate) + UDP. Functionally, UDP-glucuronosyltransferase (UGT) that catalyzes phase II biotransformation reactions in which lipophilic substrates are conjugated with glucuronic acid to increase the metabolite's water solubility, thereby facilitating excretion into either the urine or bile. Essential for the elimination and detoxification of drugs, xenobiotics and endogenous compounds. Catalyzes the glucuronidation of endogenous steroid hormones such as androgens (testosterone and epitestosterone) and estrogens (estradiol and epiestriol). Contributes to bile acid (BA) detoxification by catalyzing the glucuronidation of BA substrates, which are natural detergents for dietary lipids absorption. Shows a high affinity to aliphatic odorants such as citronellol as well as olfactory tissue specificity, and therefore may be involved in olfaction. Shows a potential role in detoxification of toxic waste compounds in the amniotic fluid before birth, and air-born chemical after birth. The protein is UDP-glucuronosyltransferase 2A1 of Homo sapiens (Human).